The primary structure comprises 426 residues: Protein PHOSPHATE STARVATION RESPONSE 2 (426 aa).

Disordered regions lie at residues 27-81, 96-123, and 198-247; these read ATLD…PLRS, YTNA…QYGG, and TQPQ…NSKT. A compositionally biased stretch (polar residues) spans 69–81; the sequence is FQSSTGSVGPLRS. 2 stretches are compositionally biased toward low complexity: residues 102–119 and 205–225; these read YNSQ…NYGS and AAQS…SSQS. Residues 237–246 are compositionally biased toward polar residues; that stretch reads SGASNTSNSK. The HTH myb-type domain occupies 243-303; the sequence is SNSKTRMRWT…HLQKYRTARY (61 aa). Residues 274 to 299 constitute a DNA-binding region (H-T-H motif); that stretch reads PKGVLKLMKADNLTIYHVKSHLQKYR. Disordered stretches follow at residues 302-326 and 382-426; these read RYRP…PSID and DKAV…SGDR. A compositionally biased stretch (basic and acidic residues) spans 303–322; sequence YRPELSEGSSEKKAASKEDI. Composition is skewed to polar residues over residues 387-401 and 411-426; these read ASTS…SDLP and ENSQ…SGDR.

Interacts (via C-terminus) with SPX4 (via N-terminus) in the presence of inositol polyphosphate. Interacts (via C-terminus) with SPX1 and SPX2 (via SPX domain). Interacts with RLI1 in the nucleus.

Its subcellular location is the nucleus. The protein resides in the cytoplasm. Transcription factor involved in phosphate starvation signaling. Binds to P1BS, an imperfect palindromic sequence 5'-GNATATNC-3', to promote the expression of inorganic phosphate (Pi) starvation-responsive genes. Functionally redundant with PHR1 and PHR3 in regulating Pi starvation response and Pi homeostasis. Involved in both systematic and local Pi-signaling pathways. Regulates several Pi transporters. PHR2 binding to DNA is repressed redundantly by SPX1, SPX2 and SPX4 in a PI-dependent manner. The DNA-binding activity is also repressed by SPX4. Involved in root growth under Pi deprivation. Involved in the modulation of Pi response and homeostasis together with RLI1; promotes RLI1 expression in response to nitrate availability, thus triggering the nitrate-induced phosphate response (NIPR). The chain is Protein PHOSPHATE STARVATION RESPONSE 2 from Oryza sativa subsp. indica (Rice).